We begin with the raw amino-acid sequence, 78 residues long: Cell division topological specificity factor (78 aa).

The protein belongs to the MinE family.

Its function is as follows. Prevents the cell division inhibition by proteins MinC and MinD at internal division sites while permitting inhibition at polar sites. This ensures cell division at the proper site by restricting the formation of a division septum at the midpoint of the long axis of the cell. This is Cell division topological specificity factor from Helicobacter hepaticus (strain ATCC 51449 / 3B1).